The primary structure comprises 112 residues: Osmotically-inducible putative lipoprotein OsmE (112 aa).

The first 20 residues, 1–20, serve as a signal peptide directing secretion; it reads MNKNMAGILSAAAVLTMLAG. Residue C21 is the site of N-palmitoyl cysteine attachment. C21 carries the S-diacylglycerol cysteine lipid modification.

Its subcellular location is the cell inner membrane. This chain is Osmotically-inducible putative lipoprotein OsmE (osmE), found in Escherichia coli O157:H7.